The chain runs to 507 residues: ATP synthase subunit alpha (507 aa).

Residue 168-175 coordinates ATP; it reads GDRKTGKT.

This sequence belongs to the ATPase alpha/beta chains family. As to quaternary structure, F-type ATPases have 2 components, CF(1) - the catalytic core - and CF(0) - the membrane proton channel. CF(1) has five subunits: alpha(3), beta(3), gamma(1), delta(1), epsilon(1). CF(0) has three main subunits: a(1), b(2) and c(9-12). The alpha and beta chains form an alternating ring which encloses part of the gamma chain. CF(1) is attached to CF(0) by a central stalk formed by the gamma and epsilon chains, while a peripheral stalk is formed by the delta and b chains.

The protein localises to the cell inner membrane. The catalysed reaction is ATP + H2O + 4 H(+)(in) = ADP + phosphate + 5 H(+)(out). In terms of biological role, produces ATP from ADP in the presence of a proton gradient across the membrane. The alpha chain is a regulatory subunit. The polypeptide is ATP synthase subunit alpha (Ehrlichia ruminantium (strain Gardel)).